The sequence spans 730 residues: Nitrogen regulatory protein GLN3 (730 aa).

Residues 1–45 form a disordered region; the sequence is MQDDPENSKLYDLLNSHLDVHGRSNEEPRQTGDSRSQSSGNTGEN. A compositionally biased stretch (basic and acidic residues) spans 18–32; sequence LDVHGRSNEEPRQTG. Polar residues predominate over residues 33–43; that stretch reads DSRSQSSGNTG. The 9aaTAD motif lies at 129–137; the sequence is GEIAQLWDF. Disordered regions lie at residues 187–208 and 224–262; these read SSTS…TNAQ and SSSA…TTNS. The span at 224–240 shows a compositional bias: low complexity; sequence SSSAMNITNNNNSNNSN. A Phosphoserine modification is found at Ser-251. A compositionally biased stretch (polar residues) spans 252-262; that stretch reads IGLSSSNTTNS. A phosphoserine mark is found at Ser-267 and Ser-285. The segment at 306 to 330 adopts a GATA-type zinc-finger fold; sequence CFNCKTFKTPLWRRSPEGNTLCNAC. 2 disordered regions span residues 355–398 and 449–516; these read SKKR…SLQQ and ANFN…NSQQ. Composition is skewed to low complexity over residues 370 to 384, 449 to 470, and 482 to 499; these read TPSA…VTTT, ANFN…HNSN, and RSST…SSRS. At Ser-469 the chain carries Phosphoserine. Ser-552 and Ser-562 each carry phosphoserine. Disordered stretches follow at residues 593-673 and 696-717; these read LHEQ…SNSF and DVSA…KESS. Composition is skewed to low complexity over residues 596–631, 641–651, and 658–672; these read QQQV…NFVS, TPVDSPSVSRP, and TSLL…ESNS.

It is found in the nucleus. Functionally, positive nitrogen regulatory protein. Required for the activation of transcription of a number of genes (including the allantoin pathway genes) in response to the replacement of glutamine by glutamate as source of nitrogen. Binds the nitrogen upstream activation sequence of GLN1, the gene encoding glutamine synthetase. URE2 may catalytically inactivate GLN3 in response to an increase in the intracellular concentration of glutamine. This is Nitrogen regulatory protein GLN3 (GLN3) from Saccharomyces cerevisiae (strain ATCC 204508 / S288c) (Baker's yeast).